The following is a 228-amino-acid chain: Ribonuclease HII (228 aa).

Residues 1–210 (MKIAGIDEAG…LKKIAEKVES (210 aa)) form the RNase H type-2 domain. A divalent metal cation-binding residues include aspartate 7, glutamate 8, and aspartate 105.

Belongs to the RNase HII family. As to quaternary structure, monomer. Mn(2+) serves as cofactor. It depends on Mg(2+) as a cofactor.

The protein localises to the cytoplasm. It carries out the reaction Endonucleolytic cleavage to 5'-phosphomonoester.. Functionally, endonuclease that specifically degrades the RNA of RNA-DNA hybrids. In Thermococcus kodakarensis (strain ATCC BAA-918 / JCM 12380 / KOD1) (Pyrococcus kodakaraensis (strain KOD1)), this protein is Ribonuclease HII (rnhB).